The sequence spans 1265 residues: 1-phosphatidylinositol 4,5-bisphosphate phosphodiesterase gamma-2 (1265 aa).

The PH domain occupies 20–131 (RALELGTVMT…WLSGLKILHQ (112 aa)). The region spanning 312 to 456 (QDMNNPLSHY…LREKIIIKHK (145 aa)) is the PI-PLC X-box domain. Catalysis depends on residues histidine 327 and histidine 372. 2 consecutive SH2 domains span residues 532–635 (WFHK…TDPV) and 646–735 (WYYD…RYPV). Phosphotyrosine; by BTK is present on residues tyrosine 753 and tyrosine 759. In terms of domain architecture, SH3 spans 769–829 (MPQRTVKALY…PSNYVEDIST (61 aa)). The region spanning 930-1044 (LSDLVVYCKP…GYVLQPESMR (115 aa)) is the PI-PLC Y-box domain. The C2 domain occupies 1038–1169 (LQPESMRTEK…SGFRSVPLKN (132 aa)). The residue at position 1197 (tyrosine 1197) is a Phosphotyrosine; by BTK. Phosphotyrosine occurs at positions 1217 and 1245.

Part of a complex composed of EEIG1, TNFRSF11A/RANK, PLCG2, GAB2, TEC and BTK; complex formation increases in the presence of TNFSF11/RANKL. Interacts (via SH2 domain) with CSF1R (tyrosine phosphorylated). Interacts constitutively with THEMIS2. The cofactor is Ca(2+). Post-translationally, phosphorylated on tyrosine residues by CSF1R. Phosphorylated on tyrosine residues by BTK and SYK; upon ligand-induced activation of a variety of growth factor receptors and immune system receptors. Phosphorylation leads to increased phospholipase activity.

Its subcellular location is the membrane raft. The enzyme catalyses a 1,2-diacyl-sn-glycero-3-phospho-(1D-myo-inositol-4,5-bisphosphate) + H2O = 1D-myo-inositol 1,4,5-trisphosphate + a 1,2-diacyl-sn-glycerol + H(+). Functionally, the production of the second messenger molecules diacylglycerol (DAG) and inositol 1,4,5-trisphosphate (IP3) is mediated by activated phosphatidylinositol-specific phospholipase C enzymes. It is a crucial enzyme in transmembrane signaling. The chain is 1-phosphatidylinositol 4,5-bisphosphate phosphodiesterase gamma-2 from Homo sapiens (Human).